We begin with the raw amino-acid sequence, 134 residues long: Transcription antitermination protein NusB (134 aa).

Belongs to the NusB family.

Functionally, involved in transcription antitermination. Required for transcription of ribosomal RNA (rRNA) genes. Binds specifically to the boxA antiterminator sequence of the ribosomal RNA (rrn) operons. This Halothermothrix orenii (strain H 168 / OCM 544 / DSM 9562) protein is Transcription antitermination protein NusB.